The chain runs to 87 residues: U3-theraphotoxin-Hhn1d (87 aa).

The signal sequence occupies residues M1–A24. Residues S25–R52 constitute a propeptide that is removed on maturation. Disulfide bonds link C54/C67, C61/C72, and C66/C79.

It belongs to the neurotoxin 10 (Hwtx-1) family. 51 (Hntx-8) subfamily. Hntx-8 sub-subfamily. Expressed by the venom gland.

Its subcellular location is the secreted. Ion channel inhibitor. This is U3-theraphotoxin-Hhn1d from Cyriopagopus hainanus (Chinese bird spider).